Here is a 207-residue protein sequence, read N- to C-terminus: Ion-translocating oxidoreductase complex subunit G (207 aa).

The chain crosses the membrane as a helical span at residues 11 to 31 (GILLGFIALLCTIISTGIFFL). T175 carries the post-translational modification FMN phosphoryl threonine.

The protein belongs to the RnfG family. In terms of assembly, the complex is composed of six subunits: RnfA, RnfB, RnfC, RnfD, RnfE and RnfG. The cofactor is FMN.

It localises to the cell inner membrane. Functionally, part of a membrane-bound complex that couples electron transfer with translocation of ions across the membrane. This is Ion-translocating oxidoreductase complex subunit G from Haemophilus influenzae (strain 86-028NP).